We begin with the raw amino-acid sequence, 591 residues long: Aspartate--tRNA ligase (591 aa).

Glu171 lines the L-aspartate pocket. The tract at residues 195 to 198 (QLFK) is aspartate. Arg217 contributes to the L-aspartate binding site. ATP-binding positions include 217 to 219 (RDE) and Gln226. An L-aspartate-binding site is contributed by His448. Glu482 provides a ligand contact to ATP. L-aspartate is bound at residue Arg489. 534-537 (GLDR) contacts ATP.

This sequence belongs to the class-II aminoacyl-tRNA synthetase family. Type 1 subfamily. In terms of assembly, homodimer.

It is found in the cytoplasm. It carries out the reaction tRNA(Asp) + L-aspartate + ATP = L-aspartyl-tRNA(Asp) + AMP + diphosphate. Catalyzes the attachment of L-aspartate to tRNA(Asp) in a two-step reaction: L-aspartate is first activated by ATP to form Asp-AMP and then transferred to the acceptor end of tRNA(Asp). The chain is Aspartate--tRNA ligase from Aliivibrio fischeri (strain MJ11) (Vibrio fischeri).